We begin with the raw amino-acid sequence, 626 residues long: tRNA uridine 5-carboxymethylaminomethyl modification enzyme MnmG (626 aa).

Position 13-18 (13-18 (GGGHAG)) interacts with FAD. Residue 273–287 (GPRYCPSIEDKIHRF) participates in NAD(+) binding.

Belongs to the MnmG family. Homodimer. Heterotetramer of two MnmE and two MnmG subunits. FAD serves as cofactor.

It is found in the cytoplasm. Its function is as follows. NAD-binding protein involved in the addition of a carboxymethylaminomethyl (cmnm) group at the wobble position (U34) of certain tRNAs, forming tRNA-cmnm(5)s(2)U34. This Acinetobacter baumannii (strain ACICU) protein is tRNA uridine 5-carboxymethylaminomethyl modification enzyme MnmG.